Here is a 246-residue protein sequence, read N- to C-terminus: Cell division protein ZapD (246 aa).

This sequence belongs to the ZapD family. Interacts with FtsZ.

It is found in the cytoplasm. In terms of biological role, cell division factor that enhances FtsZ-ring assembly. Directly interacts with FtsZ and promotes bundling of FtsZ protofilaments, with a reduction in FtsZ GTPase activity. The sequence is that of Cell division protein ZapD from Vibrio parahaemolyticus serotype O3:K6 (strain RIMD 2210633).